Consider the following 108-residue polypeptide: Glutaredoxin 4 (108 aa).

Positions 5–107 constitute a Glutaredoxin domain; the sequence is IKKIQNQIQN…KTISICDKLN (103 aa). Position 22 (Lys22) interacts with glutathione. Cys30 serves as a coordination point for [2Fe-2S] cluster. Residues Arg59, Phe71, and 84–85 each bind glutathione; that span reads CN.

This sequence belongs to the glutaredoxin family. Monothiol subfamily. In terms of assembly, homodimer.

The protein resides in the cytoplasm. Functionally, monothiol glutaredoxin involved in the biogenesis of iron-sulfur clusters. This is Glutaredoxin 4 (grxD) from Buchnera aphidicola subsp. Baizongia pistaciae (strain Bp).